Reading from the N-terminus, the 487-residue chain is N-succinylglutamate 5-semialdehyde dehydrogenase (487 aa).

221–226 contacts NAD(+); the sequence is GSSDTG. Active-site residues include Glu-244 and Cys-278.

It belongs to the aldehyde dehydrogenase family. AstD subfamily.

It carries out the reaction N-succinyl-L-glutamate 5-semialdehyde + NAD(+) + H2O = N-succinyl-L-glutamate + NADH + 2 H(+). The protein operates within amino-acid degradation; L-arginine degradation via AST pathway; L-glutamate and succinate from L-arginine: step 4/5. Its function is as follows. Catalyzes the NAD-dependent reduction of succinylglutamate semialdehyde into succinylglutamate. This chain is N-succinylglutamate 5-semialdehyde dehydrogenase, found in Burkholderia vietnamiensis (strain G4 / LMG 22486) (Burkholderia cepacia (strain R1808)).